The chain runs to 502 residues: Maturase K (502 aa).

The protein belongs to the intron maturase 2 family. MatK subfamily.

The protein localises to the plastid. It localises to the chloroplast. Functionally, usually encoded in the trnK tRNA gene intron. Probably assists in splicing its own and other chloroplast group II introns. This chain is Maturase K, found in Cephalotaxus fortunei (Chinese plum-yew).